Here is a 647-residue protein sequence, read N- to C-terminus: Glutamyl-tRNA(Gln) amidotransferase subunit B, mitochondrial (647 aa).

The interval 87–106 is disordered; the sequence is QAKALKKSGHKKKKSSDNQT. The segment covering 90–100 has biased composition (basic residues); sequence ALKKSGHKKKK.

The protein belongs to the GatB/GatE family. GatB subfamily. Subunit of the heterotrimeric GatCAB amidotransferase (AdT) complex, composed of A, B and C subunits.

The protein resides in the mitochondrion. It catalyses the reaction L-glutamyl-tRNA(Gln) + L-glutamine + ATP + H2O = L-glutaminyl-tRNA(Gln) + L-glutamate + ADP + phosphate + H(+). Its function is as follows. Allows the formation of correctly charged Gln-tRNA(Gln) through the transamidation of misacylated Glu-tRNA(Gln) in the mitochondria. The reaction takes place in the presence of glutamine and ATP through an activated gamma-phospho-Glu-tRNA(Gln). The protein is Glutamyl-tRNA(Gln) amidotransferase subunit B, mitochondrial of Neurospora crassa (strain ATCC 24698 / 74-OR23-1A / CBS 708.71 / DSM 1257 / FGSC 987).